Here is a 274-residue protein sequence, read N- to C-terminus: Large ribosomal subunit protein uL2 (274 aa).

The segment at 221-256 (RGTAMNPVDHPHGGGEGRNFGKHPVTPWGVPTKGYK) is disordered.

The protein belongs to the universal ribosomal protein uL2 family. In terms of assembly, part of the 50S ribosomal subunit. Forms a bridge to the 30S subunit in the 70S ribosome.

Its function is as follows. One of the primary rRNA binding proteins. Required for association of the 30S and 50S subunits to form the 70S ribosome, for tRNA binding and peptide bond formation. It has been suggested to have peptidyltransferase activity; this is somewhat controversial. Makes several contacts with the 16S rRNA in the 70S ribosome. The sequence is that of Large ribosomal subunit protein uL2 from Thioalkalivibrio sulfidiphilus (strain HL-EbGR7).